The sequence spans 409 residues: Argininosuccinate synthase (409 aa).

ATP-binding positions include 8–16 and Ala-34; that span reads AYSGGLDTS. Residue Tyr-85 coordinates L-citrulline. Position 115 (Gly-115) interacts with ATP. Residues Thr-117, Asn-121, and Asp-122 each contribute to the L-aspartate site. Asn-121 contributes to the L-citrulline binding site. Residues Arg-125, Ser-178, Ser-187, Glu-268, and Tyr-280 each coordinate L-citrulline.

This sequence belongs to the argininosuccinate synthase family. Type 1 subfamily. In terms of assembly, homotetramer.

It localises to the cytoplasm. The catalysed reaction is L-citrulline + L-aspartate + ATP = 2-(N(omega)-L-arginino)succinate + AMP + diphosphate + H(+). It functions in the pathway amino-acid biosynthesis; L-arginine biosynthesis; L-arginine from L-ornithine and carbamoyl phosphate: step 2/3. The polypeptide is Argininosuccinate synthase (Thermotoga petrophila (strain ATCC BAA-488 / DSM 13995 / JCM 10881 / RKU-1)).